We begin with the raw amino-acid sequence, 314 residues long: Olfactory receptor 1468 (314 aa).

The Extracellular portion of the chain corresponds to 1–25 (MTEENQTVISQFLLLGLPIPSEHQH). N-linked (GlcNAc...) asparagine glycosylation occurs at asparagine 5. A helical transmembrane segment spans residues 26–49 (VFYALFLSMYLTTVLGNLIIIILI). Over 50 to 57 (HLDSHLHT) the chain is Cytoplasmic. A helical transmembrane segment spans residues 58–79 (PMYLFLSNLSFSDLCFSSVTMP). Residues 80 to 100 (KLLQNMQSQVPSIPFAGCLTQ) are Extracellular-facing. An intrachain disulfide couples cysteine 97 to cysteine 189. The helical transmembrane segment at 101 to 120 (LYFYLYFADLESFLLVAMAY) threads the bilayer. Residues 121 to 139 (DRYVAICFPLHYMSIMSPK) lie on the Cytoplasmic side of the membrane. Residues 140–158 (LCVSLVVLSWVLTTFHAML) form a helical membrane-spanning segment. Over 159-196 (HTLLMARLSFCADNMIPHFFCDISPLLKLSCSDTHVNE) the chain is Extracellular. The helical transmembrane segment at 197-219 (LVIFVMGGLVIVIPFVLIIVSYA) threads the bilayer. Residues 220–236 (RVVASILKVPSVRGIHK) are Cytoplasmic-facing. A helical transmembrane segment spans residues 237–260 (IFSTCGSHLSVVSLFYGTIIGLYL). Over 261-272 (CPSANNSTVKET) the chain is Extracellular. The chain crosses the membrane as a helical span at residues 273–292 (VMAMMYTVVTPMLNPFIYSL). Residues 293–314 (RNRDMKEALIRVLCKKKITFCL) are Cytoplasmic-facing.

The protein belongs to the G-protein coupled receptor 1 family. In terms of tissue distribution, olfactory epithelium.

It localises to the cell membrane. Its function is as follows. Odorant receptor. The sequence is that of Olfactory receptor 1468 (Olr1468) from Rattus norvegicus (Rat).